A 702-amino-acid chain; its full sequence is 1,4-alpha-glucan-branching enzyme (702 aa).

A2 is modified (N-acetylalanine). Substrate-binding positions include 62–63 and 91–93; these read NE and WAP. W107 contributes to the (1,4-alpha-D-glucosyl)n binding site. 118–121 contributes to the substrate binding site; that stretch reads EYGK. (1,4-alpha-D-glucosyl)n is bound at residue K143. At Y173 the chain carries Phosphotyrosine. 333–336 serves as a coordination point for substrate; sequence EVLR. Catalysis depends on D357, which acts as the Nucleophile. E412 (proton donor) is an active-site residue.

It belongs to the glycosyl hydrolase 13 family. GlgB subfamily. Monomer.

The catalysed reaction is Transfers a segment of a (1-&gt;4)-alpha-D-glucan chain to a primary hydroxy group in a similar glucan chain.. It participates in glycan biosynthesis; glycogen biosynthesis. In terms of biological role, glycogen-branching enzyme participates in the glycogen biosynthetic process along with glycogenin and glycogen synthase. Generates alpha-1,6-glucosidic branches from alpha-1,4-linked glucose chains, to increase solubility of the glycogen polymer. The protein is 1,4-alpha-glucan-branching enzyme (Gbe1) of Mus musculus (Mouse).